A 226-amino-acid polypeptide reads, in one-letter code: MGRLFVKICGITRQDQAEAIAALGVSALGFIAVPNTPRYLPLSQARWLASLPRHVEKVGVFVDPDPRTIATWVEVGGLTAVQLHGRESPEECRQLGEWLPGIRRIKALRIRHLADLEAAHLYGDCVEALLLDAYHPQRAGGTGQTLNWPELAHRSLPLPWLLAGGLTPDNVLQALSHLQPSGIDLSSGVERQPGDKDLHKVWRLLQQLESQGWQIASALPQPNQGL.

The protein belongs to the TrpF family.

The catalysed reaction is N-(5-phospho-beta-D-ribosyl)anthranilate = 1-(2-carboxyphenylamino)-1-deoxy-D-ribulose 5-phosphate. It participates in amino-acid biosynthesis; L-tryptophan biosynthesis; L-tryptophan from chorismate: step 3/5. The polypeptide is N-(5'-phosphoribosyl)anthranilate isomerase (Synechococcus sp. (strain JA-3-3Ab) (Cyanobacteria bacterium Yellowstone A-Prime)).